Here is a 272-residue protein sequence, read N- to C-terminus: tRNA pseudouridine synthase B (272 aa).

Asp-38 (nucleophile) is an active-site residue.

The protein belongs to the pseudouridine synthase TruB family. Type 1 subfamily.

It carries out the reaction uridine(55) in tRNA = pseudouridine(55) in tRNA. In terms of biological role, responsible for synthesis of pseudouridine from uracil-55 in the psi GC loop of transfer RNAs. This Campylobacter jejuni (strain RM1221) protein is tRNA pseudouridine synthase B.